A 431-amino-acid chain; its full sequence is Tyrosine--tRNA ligase (431 aa).

Tyr34 contributes to the L-tyrosine binding site. A 'HIGH' region motif is present at residues 39–48 (PTADSLHIGH). L-tyrosine contacts are provided by Tyr171 and Gln175. A 'KMSKS' region motif is present at residues 231–235 (KFGKT). Lys234 is a binding site for ATP. Positions 353–422 (INVVEALVKT…GKYTILRRGK (70 aa)) constitute an S4 RNA-binding domain.

The protein belongs to the class-I aminoacyl-tRNA synthetase family. TyrS type 1 subfamily. As to quaternary structure, homodimer.

It is found in the cytoplasm. It catalyses the reaction tRNA(Tyr) + L-tyrosine + ATP = L-tyrosyl-tRNA(Tyr) + AMP + diphosphate + H(+). Its function is as follows. Catalyzes the attachment of tyrosine to tRNA(Tyr) in a two-step reaction: tyrosine is first activated by ATP to form Tyr-AMP and then transferred to the acceptor end of tRNA(Tyr). This Neisseria meningitidis serogroup C (strain 053442) protein is Tyrosine--tRNA ligase.